Here is a 224-residue protein sequence, read N- to C-terminus: Heme response regulator HssR (224 aa).

In terms of domain architecture, Response regulatory spans 3–116 (KCLIVDDDYK…ELLFRIQAVL (114 aa)). At aspartate 52 the chain carries 4-aspartylphosphate. The ompR/PhoB-type DNA-binding region spans 124 to 222 (QDIIKLGNVT…VRGQGYRVIT (99 aa)).

In terms of processing, phosphorylated by HssS.

The protein localises to the cytoplasm. Its function is as follows. Member of the two-component regulatory system HssS/HssR involved in intracellular heme homeostasis and tempering of staphylococcal virulence. Phosphorylated HssR binds to a direct repeat sequence within hrtAB promoter and activates the expression of hrtAB, an efflux pump, in response to extracellular heme, hemin, hemoglobin or blood. This chain is Heme response regulator HssR (hssR), found in Staphylococcus haemolyticus (strain JCSC1435).